Here is a 179-residue protein sequence, read N- to C-terminus: Peptide deformylase (179 aa).

2 residues coordinate Fe cation: Cys-103 and His-145. The active site involves Glu-146. His-149 contributes to the Fe cation binding site.

The protein belongs to the polypeptide deformylase family. The cofactor is Fe(2+).

The catalysed reaction is N-terminal N-formyl-L-methionyl-[peptide] + H2O = N-terminal L-methionyl-[peptide] + formate. In terms of biological role, removes the formyl group from the N-terminal Met of newly synthesized proteins. Requires at least a dipeptide for an efficient rate of reaction. N-terminal L-methionine is a prerequisite for activity but the enzyme has broad specificity at other positions. In Leptospira biflexa serovar Patoc (strain Patoc 1 / Ames), this protein is Peptide deformylase.